A 396-amino-acid polypeptide reads, in one-letter code: Ribosomal RNA large subunit methyltransferase I (396 aa).

Residues 2-81 (SVRLVLAKGR…ESIDIAFFSR (80 aa)) form the PUA domain.

This sequence belongs to the methyltransferase superfamily. RlmI family.

The protein resides in the cytoplasm. The enzyme catalyses cytidine(1962) in 23S rRNA + S-adenosyl-L-methionine = 5-methylcytidine(1962) in 23S rRNA + S-adenosyl-L-homocysteine + H(+). Its function is as follows. Specifically methylates the cytosine at position 1962 (m5C1962) of 23S rRNA. This chain is Ribosomal RNA large subunit methyltransferase I, found in Shigella boydii serotype 18 (strain CDC 3083-94 / BS512).